Here is a 196-residue protein sequence, read N- to C-terminus: Ribose 1,5-bisphosphate phosphokinase PhnN (196 aa).

It belongs to the ribose 1,5-bisphosphokinase family.

It catalyses the reaction alpha-D-ribose 1,5-bisphosphate + ATP = 5-phospho-alpha-D-ribose 1-diphosphate + ADP. It functions in the pathway metabolic intermediate biosynthesis; 5-phospho-alpha-D-ribose 1-diphosphate biosynthesis; 5-phospho-alpha-D-ribose 1-diphosphate from D-ribose 5-phosphate (route II): step 3/3. Its function is as follows. Catalyzes the phosphorylation of ribose 1,5-bisphosphate to 5-phospho-D-ribosyl alpha-1-diphosphate (PRPP). The chain is Ribose 1,5-bisphosphate phosphokinase PhnN from Psychromonas ingrahamii (strain DSM 17664 / CCUG 51855 / 37).